The following is a 478-amino-acid chain: MSYETVIGLEVHAELSTKTKIFCNCSTKFGAKPNENTCPICMGLPGTLPVLNEEVVHLAVKAGEALHCKINKLNKMDRKNYFYPDLPKAYQISQFDIPICSGGYVEIPTKDGVKKVRLNRIHIEEDAGKLVHLEYEPHSLIDYNRVGVPLVEIVSEPDMRSPEEAVEFMKTLRAMLQYANISDCRMDQGSMRCDANISLREVGSTEYNTKVEIKNINSFRELQKALEKEEKRQKELYDFNEGFRIKQETRRWDSGKGKTVTMRTKEDANDYRYFPEPDIIPIVVKDELLEKVKEEMPELPVERKARFEDQYKLGSKEIEILIEDKALADYFEKLVEAGCESKTASNWILGDMLRLMRETETDSKAIPVPVEHMNQLIEMIKTKEISNTAAKEVFEEMFKTSKEPKVVVKEKGLSQISDESALQKMVEDVINNNEKSVLDYKAGKKQAIGYLVGQVMKQSKGKANPPMVKELLEKVLSE.

This sequence belongs to the GatB/GatE family. GatB subfamily. As to quaternary structure, heterotrimer of A, B and C subunits.

It carries out the reaction L-glutamyl-tRNA(Gln) + L-glutamine + ATP + H2O = L-glutaminyl-tRNA(Gln) + L-glutamate + ADP + phosphate + H(+). The enzyme catalyses L-aspartyl-tRNA(Asn) + L-glutamine + ATP + H2O = L-asparaginyl-tRNA(Asn) + L-glutamate + ADP + phosphate + 2 H(+). Its function is as follows. Allows the formation of correctly charged Asn-tRNA(Asn) or Gln-tRNA(Gln) through the transamidation of misacylated Asp-tRNA(Asn) or Glu-tRNA(Gln) in organisms which lack either or both of asparaginyl-tRNA or glutaminyl-tRNA synthetases. The reaction takes place in the presence of glutamine and ATP through an activated phospho-Asp-tRNA(Asn) or phospho-Glu-tRNA(Gln). In Clostridium acetobutylicum (strain ATCC 824 / DSM 792 / JCM 1419 / IAM 19013 / LMG 5710 / NBRC 13948 / NRRL B-527 / VKM B-1787 / 2291 / W), this protein is Aspartyl/glutamyl-tRNA(Asn/Gln) amidotransferase subunit B 2 (gatB2).